Consider the following 367-residue polypeptide: tRNA-specific 2-thiouridylase MnmA (367 aa).

Residues 12–19 (GMSGGVDS) and M38 contribute to the ATP site. The tract at residues 98–100 (NPD) is interaction with target base in tRNA. Catalysis depends on C103, which acts as the Nucleophile. C103 and C200 are disulfide-bonded. Residue G128 coordinates ATP. Residues 150–152 (KDQ) form an interaction with tRNA region. C200 acts as the Cysteine persulfide intermediate in catalysis. The interaction with tRNA stretch occupies residues 312–313 (RY).

Belongs to the MnmA/TRMU family. In terms of assembly, interacts with TusE.

The protein localises to the cytoplasm. The enzyme catalyses S-sulfanyl-L-cysteinyl-[protein] + uridine(34) in tRNA + AH2 + ATP = 2-thiouridine(34) in tRNA + L-cysteinyl-[protein] + A + AMP + diphosphate + H(+). Its function is as follows. Catalyzes the 2-thiolation of uridine at the wobble position (U34) of tRNA(Lys), tRNA(Glu) and tRNA(Gln), leading to the formation of s(2)U34, the first step of tRNA-mnm(5)s(2)U34 synthesis. Sulfur is provided by IscS, via a sulfur-relay system. Binds ATP and its substrate tRNAs. The sequence is that of tRNA-specific 2-thiouridylase MnmA from Photorhabdus laumondii subsp. laumondii (strain DSM 15139 / CIP 105565 / TT01) (Photorhabdus luminescens subsp. laumondii).